Consider the following 381-residue polypeptide: Ecotin-like protein 3 (381 aa).

The tract at residues 232-381 is disordered; sequence EHLEVCPKNN…GSKADPVDGK (150 aa). Positions 273–292 are enriched in polar residues; that stretch reads NESSPSRPRLSSTAYWPQEN. Residues 336–347 show a composition bias toward basic and acidic residues; it reads RKAEDDVYEKTM. The span at 363–372 shows a compositional bias: polar residues; the sequence is SASSTKSGNG.

It belongs to the protease inhibitor I11 (ecotin) family.

The polypeptide is Ecotin-like protein 3 (Leishmania major).